We begin with the raw amino-acid sequence, 1339 residues long: Receptor tyrosine-protein kinase erbB-3 (1339 aa).

An N-terminal signal peptide occupies residues 1–19 (MRATGTLQVLCFLLSLARG). Residues 20 to 643 (SEMGNSQAVC…EVLMSKPHLV (624 aa)) lie on the Extracellular side of the membrane. Asn126 carries an N-linked (GlcNAc...) asparagine glycan. Disulfide bonds link Cys186-Cys194, Cys190-Cys202, Cys210-Cys218, Cys214-Cys226, Cys227-Cys235, Cys231-Cys243, Cys246-Cys255, Cys259-Cys286, Cys290-Cys301, Cys305-Cys320, and Cys323-Cys327. Asn250 is a glycosylation site (N-linked (GlcNAc...) asparagine). N-linked (GlcNAc...) asparagine glycosylation is found at Asn353, Asn408, Asn414, Asn437, and Asn469. Cystine bridges form between Cys500/Cys509, Cys504/Cys517, Cys520/Cys529, Cys533/Cys549, Cys552/Cys565, Cys556/Cys573, Cys576/Cys585, Cys589/Cys610, Cys613/Cys621, and Cys617/Cys629. The N-linked (GlcNAc...) asparagine glycan is linked to Asn522. A glycan (N-linked (GlcNAc...) asparagine) is linked at Asn566. N-linked (GlcNAc...) asparagine glycosylation is present at Asn616. A helical transmembrane segment spans residues 644-662 (IAVTVGLAVILMILGGSFL). The Cytoplasmic portion of the chain corresponds to 663 to 1339 (YWRGRRIQNK…LFPKANAQRT (677 aa)). Position 684 is a phosphoserine (Ser684). The Protein kinase domain maps to 707 to 964 (LRKLKVLGSG…TFKELANEFT (258 aa)). Residues 713-721 (LGSGVFGTV), Lys740, 786-788 (QYL), and 832-837 (DLALRN) contribute to the ATP site. The Proton acceptor role is filled by Asp832. Ser980 carries the post-translational modification Phosphoserine. The span at 1023-1036 (SLGSALSLPTGTLT) shows a compositional bias: low complexity. Disordered stretches follow at residues 1023–1052 (SLGS…SGYM) and 1078–1215 (PISL…GSLE). Residues 1039-1052 (RGSQSLLSPSSGYM) are compositionally biased toward polar residues. Residues 1172 to 1184 (GTLSSVGLSSVLG) are compositionally biased toward low complexity. Residues 1185-1195 (TEEEDEDEEYE) are compositionally biased toward acidic residues.

This sequence belongs to the protein kinase superfamily. Tyr protein kinase family. EGF receptor subfamily. In terms of assembly, monomer and homodimer. Heterodimer with each of the other ERBB receptors (Potential). Interacts with CSPG5, PA2G4, GRB7, MYOC and MUC1. Found in a ternary complex with NRG1 and ITGAV:ITGB3 or ITGA6:ITGB4. Autophosphorylated. Ligand-binding increases phosphorylation on tyrosine residues and promotes its association with the p85 subunit of phosphatidylinositol 3-kinase.

The protein resides in the membrane. It carries out the reaction L-tyrosyl-[protein] + ATP = O-phospho-L-tyrosyl-[protein] + ADP + H(+). Its function is as follows. Tyrosine-protein kinase that plays an essential role as cell surface receptor for neuregulins. Binds to neuregulin-1 (NRG1) and is activated by it; ligand-binding increases phosphorylation on tyrosine residues and promotes its association with the p85 subunit of phosphatidylinositol 3-kinase. May also be activated by CSPG5. Involved in the regulation of myeloid cell differentiation. In Rattus norvegicus (Rat), this protein is Receptor tyrosine-protein kinase erbB-3 (Erbb3).